A 166-amino-acid chain; its full sequence is Spiderine-1b (166 aa).

The N-terminal stretch at 1–18 (MKFALVLLGICAFYLVNA) is a signal peptide. Residues 19–58 (TGDLETELEASELQELQEALDLIGETSLESLEAEELEEAR) constitute a propeptide, removed in mature form. The tract at residues 59-99 (KFKWGKLFSAAKKLYKKGKKLSKNKNFKKALKFGKQLAKNL) is linear cationic cytotoxin domain. The region spanning 113 to 166 (NNKCWAIGTTCSDDCDCCPEHHCHCPAGKWLPGLFRCTCQVTESDKVNKCPPAE) is the Oxytoxin-type inhibitor cystine knot (ICK) domain. Intrachain disulfides connect cysteine 116–cysteine 130, cysteine 123–cysteine 135, cysteine 127–cysteine 162, cysteine 129–cysteine 151, and cysteine 137–cysteine 149.

This sequence belongs to the spiderine family. Cationic/spiderine subfamily. Expressed by the venom gland.

The protein resides in the secreted. Its function is as follows. Has antimicrobial, insecticidal, cytolytic and cytotoxic activity. In Oxyopes takobius (Lynx spider), this protein is Spiderine-1b.